A 336-amino-acid chain; its full sequence is Major histocompatibility complex class I-related protein 1 (336 aa).

An N-terminal signal peptide occupies residues Met-1 to Ala-18. An alpha-1 region spans residues Arg-19–Ser-105. The tract at residues Arg-19 to Thr-197 is antigen-binding cleft. Residues Arg-19 to Val-298 are Extracellular-facing. Residues Tyr-25 and Arg-27 each coordinate 8-(9H-purin-6-yl)-2-oxa-8-azabicyclo[3.3.1]nona-3,6-diene-4,6-dicarbaldehyde. Positions 27, 42, and 61 each coordinate 5-(2-oxoethylideneamino)-6-(D-ribitylamino)uracil. 5-(2-oxopropylideneamino)-6-(D-ribitylamino)uracil is bound by residues Arg-27, Ser-42, and Lys-61. 7-hydroxy-6-methyl-8-(1-D-ribityl)lumazine-binding residues include Arg-27, Ser-42, and Lys-61. The 8-(9H-purin-6-yl)-2-oxa-8-azabicyclo[3.3.1]nona-3,6-diene-4,6-dicarbaldehyde site is built by Lys-61 and His-76. Residue Lys-61 participates in 2-amino-4-oxopteridine-6-carbaldehyde binding. Residue Lys-61 participates in pyridoxal binding. A glycan (N-linked (GlcNAc...) asparagine) is linked at Asn-103. An alpha-2 region spans residues Gly-106–Thr-197. Arg-112 is a binding site for 8-(9H-purin-6-yl)-2-oxa-8-azabicyclo[3.3.1]nona-3,6-diene-4,6-dicarbaldehyde. 5-(2-oxoethylideneamino)-6-(D-ribitylamino)uracil is bound by residues Arg-112, Tyr-170, and Gln-171. The 5-(2-oxopropylideneamino)-6-(D-ribitylamino)uracil site is built by Arg-112, Tyr-170, and Gln-171. Residues Arg-112, Tyr-170, and Gln-171 each coordinate 7-hydroxy-6-methyl-8-(1-D-ribityl)lumazine. Cystine bridges form between Cys-116–Cys-179 and Cys-218–Cys-274. The interval Glu-198–Gln-289 is alpha-3. Residues Pro-200 to Leu-295 form the Ig-like C1-type domain. The segment at Glu-290–Val-298 is connecting peptide. A helical membrane pass occupies residues Lys-299 to Arg-319. Over Lys-320 to His-336 the chain is Cytoplasmic.

Belongs to the MHC class I family. Heterotrimer that consists of MR1, B2M and metabolite antigen. Major classes of metabolite ligands presented by MR1 include riboflavin-related antigens, pyrimidines and ribityl lumazines, nucleobase adducts and folate derivatives. Forms reversible covalent Schiff base complexes with microbial pyrimidine-based metabolite, which serves as a molecular switch triggering complete folding, stable association with B2M and translocation of the ternary complex from endoplasmic reticulum to the plasma membrane. Alternatively, forms non-Schiff base complexes with ribityl lumazines. On antigen-presenting cells, the ternary complex interacts with TCR on MR1-restricted T cells. Interacts with TAPBP and TAPBPL chaperones in the endoplasmic reticulum. TAPBP associated or not with MHC class I peptide loading complex binds ligand-free MR1 or MR1-B2M complex, providing for stable MR1 pools ready for metabolite antigen processing. TAPBPL interacts with MR1 in a ligand-independent way; this interaction may stabilize MR1 pool and facilitate ligand loading and dissociation. Structurally, MR1-B2M heterodimer adopts a topology similar to classical MHC class I molecules, with alpha-1 and alpha-2 domains of MR1 forming the antigen-binding cleft composed of two alpha-helices resting on a floor of 7-stranded anti-parallel beta-pleated sheet. MR1-B2M heterodimer (via alpha-helices) interacts with TCR (via CDR domains). Post-translationally, N-glycosylated.

It is found in the cell membrane. The protein localises to the endoplasmic reticulum membrane. It localises to the golgi apparatus membrane. The protein resides in the early endosome membrane. Its subcellular location is the late endosome membrane. In terms of biological role, antigen-presenting molecule specialized in displaying microbial pyrimidine-based metabolites to alpha-beta T cell receptors (TCR) on innate-type mucosal-associated invariant T (MAIT) cells. In complex with B2M preferentially presents riboflavin-derived metabolites to semi-invariant TCRs on MAIT cells, guiding immune surveillance of the microbial metabolome at mucosal epithelial barriers. Signature pyrimidine-based microbial antigens are generated via non-enzymatic condensation of metabolite intermediates of the riboflavin pathway with by-products arising from other metabolic pathways such as glycolysis. Typical potent antigenic metabolites are 5-(2-oxoethylideneamino)-6-D-ribitylaminouracil (5-OE-RU) and 5-(2-oxopropylideneamino)-6-D-ribitylaminouracil (5-OP-RU), products of condensation of 5-amino-6-D-ribityaminouracil (5-A-RU) with glyoxal or methylglyoxal by-products, respectively. May present microbial antigens to various MAIT cell subsets, providing for unique recognition of diverse microbes, including pathogens that do not synthesize riboflavin. Upon antigen recognition, elicits rapid innate-type MAIT cell activation to eliminate pathogenic microbes by directly killing infected cells. During T cell development, drives thymic selection and post-thymic terminal differentiation of MAIT cells in a process dependent on commensal microflora. Acts as an immune sensor of cancer cell metabolome. May present a tumor-specific or -associated metabolite essential for cancer cell survival to a pan-cancer TCR on a non-MAIT CD8-positive T cell clone, triggering T cell-mediated killing of a wide range of cancer cell types. May present tumor-enriched pyridoxal and pyridoxal 5'-phosphate antigens, enabling preferential recognition of cancer cells. Presents nucleobase carbonyl adducts generated during oxidative stress. Captures M3Ade, a nucleobase adduct composed of one adenine modified by a malondialdehyde trimer, for recognition by MR1-restricted T cell clones expressing a polyclonal TCR repertoire. This Bos taurus (Bovine) protein is Major histocompatibility complex class I-related protein 1.